An 82-amino-acid chain; its full sequence is Transcription elongation factor 1 homolog (82 aa).

Positions 26, 29, 50, and 53 each coordinate Zn(2+).

The protein belongs to the ELOF1 family.

It localises to the nucleus. Transcription elongation factor implicated in the maintenance of proper chromatin structure in actively transcribed regions. The polypeptide is Transcription elongation factor 1 homolog (Drosophila melanogaster (Fruit fly)).